Consider the following 125-residue polypeptide: Ribonuclease P protein component (125 aa).

It belongs to the RnpA family. In terms of assembly, consists of a catalytic RNA component (M1 or rnpB) and a protein subunit.

The enzyme catalyses Endonucleolytic cleavage of RNA, removing 5'-extranucleotides from tRNA precursor.. In terms of biological role, RNaseP catalyzes the removal of the 5'-leader sequence from pre-tRNA to produce the mature 5'-terminus. It can also cleave other RNA substrates such as 4.5S RNA. The protein component plays an auxiliary but essential role in vivo by binding to the 5'-leader sequence and broadening the substrate specificity of the ribozyme. This is Ribonuclease P protein component from Ruegeria pomeroyi (strain ATCC 700808 / DSM 15171 / DSS-3) (Silicibacter pomeroyi).